The primary structure comprises 465 residues: Eukaryotic translation initiation factor 3 subunit M (465 aa).

One can recognise a PCI domain in the interval 215 to 383 (EEMSYNHVIL…GEFLVHRATY (169 aa)). Residues 429–465 (AAAESGREGGARGGAGERRRGGGGHQGPREVDLVGGD) form a disordered region. Basic and acidic residues-rich tracts occupy residues 433–448 (SGRE…ERRR) and 455–465 (GPREVDLVGGD).

This sequence belongs to the eIF-3 subunit M family. As to quaternary structure, component of the eukaryotic translation initiation factor 3 (eIF-3) complex.

It localises to the cytoplasm. Functionally, component of the eukaryotic translation initiation factor 3 (eIF-3) complex, which is involved in protein synthesis of a specialized repertoire of mRNAs and, together with other initiation factors, stimulates binding of mRNA and methionyl-tRNAi to the 40S ribosome. The eIF-3 complex specifically targets and initiates translation of a subset of mRNAs involved in cell proliferation. The protein is Eukaryotic translation initiation factor 3 subunit M of Coccidioides immitis (strain RS) (Valley fever fungus).